The following is a 94-amino-acid chain: MRMNDYQLEDDPVTKQKYFRRYAPRKGDKIYKEYKKFFFYSDAFRPLKFACEAIIEKYEDEIFELIAQEANHLADMLCNEKSDLCGTPTNSPEP.

The protein belongs to the canopy family.

The protein is Protein canopy homolog 1 (Cnpy1) of Mus musculus (Mouse).